Reading from the N-terminus, the 161-residue chain is Small ribosomal subunit protein uS15 (161 aa).

Residues Met1 to Ser13 show a composition bias toward basic residues. The interval Met1–Pro22 is disordered.

It belongs to the universal ribosomal protein uS15 family. In terms of assembly, part of the 30S ribosomal subunit.

The polypeptide is Small ribosomal subunit protein uS15 (Hyperthermus butylicus (strain DSM 5456 / JCM 9403 / PLM1-5)).